Consider the following 328-residue polypeptide: Biotin synthase (328 aa).

Residues 41 to 260 (TAIETASLLS…VALARILMPA (220 aa)) enclose the Radical SAM core domain. The [4Fe-4S] cluster site is built by Cys-56, Cys-60, and Cys-63. 4 residues coordinate [2Fe-2S] cluster: Cys-100, Cys-131, Cys-191, and Arg-264.

Belongs to the radical SAM superfamily. Biotin synthase family. In terms of assembly, homodimer. [4Fe-4S] cluster serves as cofactor. The cofactor is [2Fe-2S] cluster.

It catalyses the reaction (4R,5S)-dethiobiotin + (sulfur carrier)-SH + 2 reduced [2Fe-2S]-[ferredoxin] + 2 S-adenosyl-L-methionine = (sulfur carrier)-H + biotin + 2 5'-deoxyadenosine + 2 L-methionine + 2 oxidized [2Fe-2S]-[ferredoxin]. It participates in cofactor biosynthesis; biotin biosynthesis; biotin from 7,8-diaminononanoate: step 2/2. Its function is as follows. Catalyzes the conversion of dethiobiotin (DTB) to biotin by the insertion of a sulfur atom into dethiobiotin via a radical-based mechanism. In Cereibacter sphaeroides (strain ATCC 17029 / ATH 2.4.9) (Rhodobacter sphaeroides), this protein is Biotin synthase.